Reading from the N-terminus, the 332-residue chain is 2,3-bisphosphoglycerate-dependent phosphoglycerate mutase 2 (332 aa).

A chloroplast-targeting transit peptide spans 1 to 48 (MATSTTMSHQAIGSVVSQRPFKASQFLKEPLNNVPMKFRQKRFKIEAT). Residues 85–92 (RHGESLWN), 98–99 (TG), Arg-135, 189–192 (ERMY), Lys-200, 216–217 (RR), and 260–261 (GN) each bind substrate. The active-site Tele-phosphohistidine intermediate is His-86. Glu-189 acts as the Proton donor/acceptor in catalysis.

The protein belongs to the phosphoglycerate mutase family. BPG-dependent PGAM subfamily.

It localises to the plastid. The protein localises to the chloroplast. The enzyme catalyses (2R)-2-phosphoglycerate = (2R)-3-phosphoglycerate. It participates in carbohydrate degradation; glycolysis; pyruvate from D-glyceraldehyde 3-phosphate: step 3/5. Catalyzes the interconversion of 2-phosphoglycerate and 3-phosphoglycerate. The protein is 2,3-bisphosphoglycerate-dependent phosphoglycerate mutase 2 of Arabidopsis thaliana (Mouse-ear cress).